The primary structure comprises 158 residues: Transcription elongation factor GreA (158 aa).

It belongs to the GreA/GreB family.

In terms of biological role, necessary for efficient RNA polymerase transcription elongation past template-encoded arresting sites. The arresting sites in DNA have the property of trapping a certain fraction of elongating RNA polymerases that pass through, resulting in locked ternary complexes. Cleavage of the nascent transcript by cleavage factors such as GreA or GreB allows the resumption of elongation from the new 3'terminus. GreA releases sequences of 2 to 3 nucleotides. This Methylobacterium sp. (strain 4-46) protein is Transcription elongation factor GreA.